A 308-amino-acid chain; its full sequence is Aspartate carbamoyltransferase catalytic subunit (308 aa).

Carbamoyl phosphate-binding residues include arginine 57 and threonine 58. Lysine 86 contributes to the L-aspartate binding site. Residues arginine 107, histidine 135, and glutamine 138 each coordinate carbamoyl phosphate. The L-aspartate site is built by arginine 167 and arginine 228. Residues leucine 267 and proline 268 each coordinate carbamoyl phosphate.

The protein belongs to the aspartate/ornithine carbamoyltransferase superfamily. ATCase family. Heterooligomer of catalytic and regulatory chains.

The enzyme catalyses carbamoyl phosphate + L-aspartate = N-carbamoyl-L-aspartate + phosphate + H(+). The protein operates within pyrimidine metabolism; UMP biosynthesis via de novo pathway; (S)-dihydroorotate from bicarbonate: step 2/3. Catalyzes the condensation of carbamoyl phosphate and aspartate to form carbamoyl aspartate and inorganic phosphate, the committed step in the de novo pyrimidine nucleotide biosynthesis pathway. The sequence is that of Aspartate carbamoyltransferase catalytic subunit from Methanococcoides burtonii (strain DSM 6242 / NBRC 107633 / OCM 468 / ACE-M).